A 220-amino-acid chain; its full sequence is RNA-free ribonuclease P (220 aa).

This sequence belongs to the HARP family.

The enzyme catalyses Endonucleolytic cleavage of RNA, removing 5'-extranucleotides from tRNA precursor.. Functionally, RNA-free RNase P that catalyzes the removal of the 5'-leader sequence from pre-tRNA to produce the mature 5'-terminus. This chain is RNA-free ribonuclease P, found in Methanothermobacter thermautotrophicus (strain ATCC 29096 / DSM 1053 / JCM 10044 / NBRC 100330 / Delta H) (Methanobacterium thermoautotrophicum).